We begin with the raw amino-acid sequence, 152 residues long: Deoxyuridine 5'-triphosphate nucleotidohydrolase (152 aa).

Substrate is bound by residues 71–73 (RSG), Asn-84, 88–90 (LID), and Met-98.

It belongs to the dUTPase family. Mg(2+) serves as cofactor.

The catalysed reaction is dUTP + H2O = dUMP + diphosphate + H(+). It participates in pyrimidine metabolism; dUMP biosynthesis; dUMP from dCTP (dUTP route): step 2/2. In terms of biological role, this enzyme is involved in nucleotide metabolism: it produces dUMP, the immediate precursor of thymidine nucleotides and it decreases the intracellular concentration of dUTP so that uracil cannot be incorporated into DNA. In Haemophilus ducreyi (strain 35000HP / ATCC 700724), this protein is Deoxyuridine 5'-triphosphate nucleotidohydrolase.